Here is a 382-residue protein sequence, read N- to C-terminus: Mannitol-1-phosphate 5-dehydrogenase (382 aa).

4–15 (AVHFGAGNIGRG) is an NAD(+) binding site.

It belongs to the mannitol dehydrogenase family.

The enzyme catalyses D-mannitol 1-phosphate + NAD(+) = beta-D-fructose 6-phosphate + NADH + H(+). The protein is Mannitol-1-phosphate 5-dehydrogenase of Vibrio vulnificus (strain CMCP6).